The primary structure comprises 460 residues: Argininosuccinate lyase (460 aa).

Belongs to the lyase 1 family. Argininosuccinate lyase subfamily.

The protein localises to the cytoplasm. The catalysed reaction is 2-(N(omega)-L-arginino)succinate = fumarate + L-arginine. It functions in the pathway amino-acid biosynthesis; L-arginine biosynthesis; L-arginine from L-ornithine and carbamoyl phosphate: step 3/3. The sequence is that of Argininosuccinate lyase from Actinobacillus succinogenes (strain ATCC 55618 / DSM 22257 / CCUG 43843 / 130Z).